The primary structure comprises 244 residues: Acidic leucine-rich nuclear phosphoprotein 32 family member A (244 aa).

LRR repeat units lie at residues 18–41 (DVKE…TDEF), 43–64 (GLEF…PKLN), 65–87 (KLKK…AEKC), and 89–110 (NLTH…EPLK). One can recognise an LRRCT domain in the interval 123–161 (CEVTNLNDYRENLFKLLPQLTYLDGYDRDDKEAPDSDAE). The segment at 148–244 (YDRDDKEAPD…DQDDEGEDDD (97 aa)) is disordered. Residues 157 to 227 (DSDAEGYVEG…EEDEGDEEAE (71 aa)) are compositionally biased toward acidic residues.

Belongs to the ANP32 family. Phosphorylated on serine residues.

It is found in the nucleus. It localises to the cytoplasm. The protein resides in the endoplasmic reticulum. In terms of biological role, implicated in a number of cellular processes, including proliferation, differentiation, caspase-dependent and caspase-independent apoptosis, suppression of transformation (tumor suppressor), inhibition of protein phosphatase 2A, regulation of mRNA trafficking and stability, and inhibition of acetyltransferases as part of the INHAT (inhibitor of histone acetyltransferases) complex. In Xenopus laevis (African clawed frog), this protein is Acidic leucine-rich nuclear phosphoprotein 32 family member A (anp32a).